Consider the following 228-residue polypeptide: Ribosomal RNA large subunit methyltransferase E (228 aa).

Gly76, Trp78, Asp99, Asp115, and Asp139 together coordinate S-adenosyl-L-methionine. Lys179 functions as the Proton acceptor in the catalytic mechanism.

This sequence belongs to the class I-like SAM-binding methyltransferase superfamily. RNA methyltransferase RlmE family.

The protein resides in the cytoplasm. The catalysed reaction is uridine(2552) in 23S rRNA + S-adenosyl-L-methionine = 2'-O-methyluridine(2552) in 23S rRNA + S-adenosyl-L-homocysteine + H(+). Specifically methylates the uridine in position 2552 of 23S rRNA at the 2'-O position of the ribose in the fully assembled 50S ribosomal subunit. In Bradyrhizobium diazoefficiens (strain JCM 10833 / BCRC 13528 / IAM 13628 / NBRC 14792 / USDA 110), this protein is Ribosomal RNA large subunit methyltransferase E.